The primary structure comprises 169 residues: MTRTDRLCVGAIAGAFGVKGEVRLKSFCAEPSDIASYGPLFTEDGGRSFRVTLTRPVAGALGARLSGVATKEEADALRGVQLYADRDRLPSLGDDEFYHADLIGLEVRDTGGALLGRVHAVHNHGAGDILEVTGAGRREALLLPFTRAVVPTVDLSIGRIVADPPEGLE.

Residues 94–168 enclose the PRC barrel domain; the sequence is DDEFYHADLI…RIVADPPEGL (75 aa).

Belongs to the RimM family. In terms of assembly, binds ribosomal protein uS19.

The protein resides in the cytoplasm. Functionally, an accessory protein needed during the final step in the assembly of 30S ribosomal subunit, possibly for assembly of the head region. Essential for efficient processing of 16S rRNA. May be needed both before and after RbfA during the maturation of 16S rRNA. It has affinity for free ribosomal 30S subunits but not for 70S ribosomes. The chain is Ribosome maturation factor RimM from Cereibacter sphaeroides (strain ATCC 17025 / ATH 2.4.3) (Rhodobacter sphaeroides).